A 194-amino-acid chain; its full sequence is Imidazoleglycerol-phosphate dehydratase (194 aa).

The protein belongs to the imidazoleglycerol-phosphate dehydratase family.

The protein resides in the cytoplasm. It catalyses the reaction D-erythro-1-(imidazol-4-yl)glycerol 3-phosphate = 3-(imidazol-4-yl)-2-oxopropyl phosphate + H2O. It participates in amino-acid biosynthesis; L-histidine biosynthesis; L-histidine from 5-phospho-alpha-D-ribose 1-diphosphate: step 6/9. The sequence is that of Imidazoleglycerol-phosphate dehydratase from Lacticaseibacillus casei (strain BL23) (Lactobacillus casei).